A 934-amino-acid chain; its full sequence is Complement component C6 (934 aa).

Positions 1–21 (MTRHLTLCFILLVMLIDKSEA) are cleaved as a signal peptide. Cystine bridges form between Cys22/Cys61, Cys24/Cys65, Cys35/Cys73, Cys39/Cys78, Cys82/Cys117, Cys93/Cys127, Cys96/Cys133, Cys140/Cys151, Cys146/Cys164, Cys158/Cys173, and Cys180/Cys218. TSP type-1 domains are found at residues 22 to 79 (CFCD…QTCP) and 81 to 134 (NCVL…KLCK). The LDL-receptor class A domain occupies 138 to 175 (TNCKNKFLCDSGRCIPSKLECNGENDCGDNSDERNCGR). Ca(2+) contacts are provided by Leu156, Asn159, Glu161, Asp163, Asp169, and Glu170. Residues 176-522 (TKPVCTRIYT…EYAAKFDPCQ (347 aa)) enclose the MACPF domain. A beta stranded transmembrane segment spans residues 278–290 (FFPIPIFHFSEKN). Residue Asn324 is glycosylated (N-linked (GlcNAc...) asparagine). Cystine bridges form between Cys399–Cys420, Cys499–Cys623, Cys521–Cys570, Cys523–Cys539, Cys526–Cys541, Cys543–Cys552, Cys577–Cys611, Cys589–Cys601, Cys644–Cys686, Cys672–Cys699, Cys704–Cys746, Cys732–Cys761, Cys773–Cys823, Cys784–Cys801, Cys786–Cys837, and Cys793–Cys816. The chain crosses the membrane as a beta stranded span at residues 402 to 415 (YETKKLKFLYMEIH). Positions 523-553 (CAPCPNNGRPRLSGTECLCVCQSGTYGENCE) constitute an EGF-like domain. Residues 565 to 612 (DGNWGCWSSWSACNAAYRRSRTRECNNPAPQRGGQSCGGKDQQEEDCT) enclose the TSP type-1 3 domain. CCP regions lie at residues 611–688 (CTVS…RCLP) and 689–765 (DRTW…EQAI). 2 Sushi domains span residues 642-701 (SGCS…ECQR) and 702-763 (TSCL…TCEQ). Residues 642 to 934 (SGCSQPPLPE…EILNPGRCPD (293 aa)) form a C5b-binding domain region. The tract at residues 766–840 (LTKSKDLCPP…FVHSGSCQEG (75 aa)) is factor I module (FIM) 1. The 55-residue stretch at 785-839 (ICMSPEEDCSAYSEDLCIFDGGSSQYFTSSACKFLAGKCLNNTQSHFVHSGSCQE) folds into the Kazal-like 1 domain. N-linked (GlcNAc...) asparagine glycans are attached at residues Asn825, Asn855, and Asn872. The tract at residues 858–934 (KRVSCGYNTC…EILNPGRCPD (77 aa)) is factor I module (FIM) 2. Disulfide bonds link Cys862/Cys873, Cys867/Cys919, Cys880/Cys897, Cys882/Cys932, and Cys888/Cys912. Residues 876–934 (HTSNCVCLLPPQCSKDENQLYCVKIGSSMREKTVNICTLGAVRCANIKVEILNPGRCPD) enclose the Kazal-like 2 domain.

It belongs to the complement C6/C7/C8/C9 family. Component of the membrane attack complex (MAC), composed of complement C5b, C6, C7, C8A, C8B, C8G and multiple copies of the pore-forming subunit C9. In terms of processing, all cysteine residues are assumed to be cross-linked to one another. Individual modules containing an even number of conserved cysteine residues are supposed to have disulfide linkages only within the same module.

It is found in the secreted. The protein resides in the target cell membrane. Membrane attack complex (MAC) assembly is inhibited by CD59, thereby protecting self-cells from damage during complement activation. MAC assembly is also inhibited by clusterin (CLU) chaperones that inhibit polymerization of C9. Functionally, component of the membrane attack complex (MAC), a multiprotein complex activated by the complement cascade, which inserts into a target cell membrane and forms a pore, leading to target cell membrane rupture and cell lysis. The MAC is initiated by proteolytic cleavage of C5 into complement C5b in response to the classical, alternative, lectin and GZMK complement pathways. The complement pathways consist in a cascade of proteins that leads to phagocytosis and breakdown of pathogens and signaling that strengthens the adaptive immune system. Together with component C5b, involved in MAC complex assembly: complement C5b and C6 associate with the outer leaflet of target cell membrane, reducing the energy for membrane bending. In Mus musculus (Mouse), this protein is Complement component C6.